The following is a 279-amino-acid chain: Energy-coupling factor transporter ATP-binding protein EcfA1 (279 aa).

The ABC transporter domain maps to 6-240 (VRLEHVFYKY…ADAMREIGLG (235 aa)). 40–47 (GHNGSGKS) is a binding site for ATP.

It belongs to the ABC transporter superfamily. Energy-coupling factor EcfA family. In terms of assembly, forms a stable energy-coupling factor (ECF) transporter complex composed of 2 membrane-embedded substrate-binding proteins (S component), 2 ATP-binding proteins (A component) and 2 transmembrane proteins (T component).

The protein resides in the cell membrane. Its function is as follows. ATP-binding (A) component of a common energy-coupling factor (ECF) ABC-transporter complex. Unlike classic ABC transporters this ECF transporter provides the energy necessary to transport a number of different substrates. The protein is Energy-coupling factor transporter ATP-binding protein EcfA1 of Listeria monocytogenes serovar 1/2a (strain ATCC BAA-679 / EGD-e).